Reading from the N-terminus, the 338-residue chain is UDP-glucose 4-epimerase (338 aa).

NAD(+) contacts are provided by residues 11–12, 31–36, 58–59, 80–84, Asn-99, Ser-124, Tyr-149, Lys-153, and Phe-178; these read YI, DNLCNS, DI, and FAGLK. Substrate contacts are provided by Ser-124 and Tyr-149. Tyr-149 acts as the Proton acceptor in catalysis. Substrate is bound by residues Asn-179, 199 to 200, 216 to 218, Arg-231, and 292 to 295; these read NL, SVF, and RSGD.

The protein belongs to the NAD(P)-dependent epimerase/dehydratase family. Homodimer. Requires NAD(+) as cofactor.

It carries out the reaction UDP-alpha-D-glucose = UDP-alpha-D-galactose. It participates in carbohydrate metabolism; galactose metabolism. Its function is as follows. Involved in the metabolism of galactose. Catalyzes the conversion of UDP-galactose (UDP-Gal) to UDP-glucose (UDP-Glc) through a mechanism involving the transient reduction of NAD. By controlling the internal galactose concentration, it may be linked to the biosynthesis of lipopolysaccharide surface molecules, which are important for the pathogenesis of H.influenzae. In Haemophilus influenzae (strain ATCC 51907 / DSM 11121 / KW20 / Rd), this protein is UDP-glucose 4-epimerase (galE).